The sequence spans 405 residues: 3-hydroxy-3-methylglutaryl-coenzyme A reductase (405 aa).

Active-site charge relay system residues include Glu-100 and Asp-310. Residue His-400 is the Proton donor of the active site.

The protein belongs to the HMG-CoA reductase family.

It catalyses the reaction (R)-mevalonate + 2 NADP(+) + CoA = (3S)-3-hydroxy-3-methylglutaryl-CoA + 2 NADPH + 2 H(+). The protein operates within metabolic intermediate biosynthesis; (R)-mevalonate biosynthesis; (R)-mevalonate from acetyl-CoA: step 3/3. Converts HMG-CoA to mevalonate. This is 3-hydroxy-3-methylglutaryl-coenzyme A reductase (hmgA) from Methanocaldococcus jannaschii (strain ATCC 43067 / DSM 2661 / JAL-1 / JCM 10045 / NBRC 100440) (Methanococcus jannaschii).